Consider the following 496-residue polypeptide: 7,8-epoxymelianol synthase CYP88A154 (496 aa).

A helical transmembrane segment spans residues Phe11–Phe31. Cys444 is a binding site for heme.

It belongs to the cytochrome P450 family. Heme serves as cofactor.

It localises to the membrane. The catalysed reaction is melianol + reduced [NADPH--hemoprotein reductase] + O2 = 7,8-epoxymelianol + oxidized [NADPH--hemoprotein reductase] + H2O + H(+). It participates in secondary metabolite biosynthesis; terpenoid biosynthesis. In terms of biological role, monooxygenase involved in the biosynthesis of glabretanes, limonoids and quassinoids triterpene natural products such as ailanthone, chaparrinone, glaucarubinone and amarolide, allelopathic degraded triterpene lactones inhibiting the growth of other plants, and possessing antimalarial, antifeedant, insecticidal, anti-inflammatory and anticancer activities. Catalyzes the epoxidation of melianol to produce 7,8-epoxymelianol. This is 7,8-epoxymelianol synthase CYP88A154 from Ailanthus altissima (Tree-of-heaven).